We begin with the raw amino-acid sequence, 709 residues long: Catalase HPII (709 aa).

The segment covering 1–26 has biased composition (polar residues); it reads MSEQNNEQRSQAAGTDTVDRGNSNAK. A disordered region spans residues 1–32; the sequence is MSEQNNEQRSQAAGTDTVDRGNSNAKLEQLEA. Active-site residues include His90 and Asn163. Residue Tyr377 participates in heme binding. Residues 419–443 form a disordered region; the sequence is RASYEPNSIDGGWPKETPPAARNGG.

It belongs to the catalase family. HPII subfamily. Requires heme as cofactor.

Its subcellular location is the cytoplasm. It catalyses the reaction 2 H2O2 = O2 + 2 H2O. Its function is as follows. Decomposes hydrogen peroxide into water and oxygen; serves to protect cells from the toxic effects of hydrogen peroxide. The sequence is that of Catalase HPII (katE) from Pseudomonas aeruginosa (strain ATCC 15692 / DSM 22644 / CIP 104116 / JCM 14847 / LMG 12228 / 1C / PRS 101 / PAO1).